The primary structure comprises 911 residues: Protein translocase subunit SecA (911 aa).

ATP contacts are provided by residues Q87, G105–T109, and D513. The tract at residues I853–G911 is disordered. Residues G862–E875 show a composition bias toward low complexity. Zn(2+) is bound by residues C895, C897, C906, and H907. The segment covering K901–G911 has biased composition (basic residues).

The protein belongs to the SecA family. As to quaternary structure, monomer and homodimer. Part of the essential Sec protein translocation apparatus which comprises SecA, SecYEG and auxiliary proteins SecDF-YajC and YidC. It depends on Zn(2+) as a cofactor.

It localises to the cell inner membrane. Its subcellular location is the cytoplasm. It catalyses the reaction ATP + H2O + cellular proteinSide 1 = ADP + phosphate + cellular proteinSide 2.. In terms of biological role, part of the Sec protein translocase complex. Interacts with the SecYEG preprotein conducting channel. Has a central role in coupling the hydrolysis of ATP to the transfer of proteins into and across the cell membrane, serving both as a receptor for the preprotein-SecB complex and as an ATP-driven molecular motor driving the stepwise translocation of polypeptide chains across the membrane. This chain is Protein translocase subunit SecA, found in Teredinibacter turnerae (strain ATCC 39867 / T7901).